Consider the following 88-residue polypeptide: Arminin 1b (88 aa).

The signal sequence occupies residues 1-18; sequence MKTVLAFLFLTFIAFTHA. Positions 19–57 are excised as a propeptide; sequence ESYEDVKEEIKNEVEREIFEDLEEESDVLESNVRELNDA. Valine 85 is subject to Valine amide.

The protein belongs to the arminin family. As to expression, expressed in entodermal epithelium along the body column.

The protein resides in the secreted. Its subcellular location is the target cell membrane. In terms of biological role, antimicrobial peptide with a broad-spectrum antimicrobial activity. Keeps its antibacterial activity under a wide range of salt concentrations that mimic physiological conditions of human blood, which is surprising, since Hydra is an obligate freshwater animal with nearly no salt tolerance. Does not affect red blood cells. The polypeptide is Arminin 1b (Hydra vulgaris (Hydra)).